An 865-amino-acid polypeptide reads, in one-letter code: DNA mismatch repair protein MutS (865 aa).

ATP is bound at residue 609–616; the sequence is GPNMAGKS.

It belongs to the DNA mismatch repair MutS family.

In terms of biological role, this protein is involved in the repair of mismatches in DNA. It is possible that it carries out the mismatch recognition step. This protein has a weak ATPase activity. This chain is DNA mismatch repair protein MutS, found in Leuconostoc citreum (strain KM20).